The following is a 164-amino-acid chain: Phosphopantetheine adenylyltransferase (164 aa).

T14 serves as a coordination point for substrate. ATP-binding positions include 14–15 (TF) and H22. The substrate site is built by K46, M78, and R92. Residues 93–95 (GLR), E103, and 128–134 (HAFISST) contribute to the ATP site.

Belongs to the bacterial CoaD family. Homohexamer. Mg(2+) is required as a cofactor.

The protein localises to the cytoplasm. The catalysed reaction is (R)-4'-phosphopantetheine + ATP + H(+) = 3'-dephospho-CoA + diphosphate. It participates in cofactor biosynthesis; coenzyme A biosynthesis; CoA from (R)-pantothenate: step 4/5. Functionally, reversibly transfers an adenylyl group from ATP to 4'-phosphopantetheine, yielding dephospho-CoA (dPCoA) and pyrophosphate. In Vibrio vulnificus (strain CMCP6), this protein is Phosphopantetheine adenylyltransferase.